The primary structure comprises 206 residues: Large ribosomal subunit protein uL13 (206 aa).

This sequence belongs to the universal ribosomal protein uL13 family.

The polypeptide is Large ribosomal subunit protein uL13 (RPL13A) (Picea mariana (Black spruce)).